Consider the following 232-residue polypeptide: Flagellar L-ring protein (232 aa).

The signal sequence occupies residues 1 to 15 (MKKVLFYVLPFAFFG). Cys-16 is lipidated: N-palmitoyl cysteine. Cys-16 is lipidated: S-diacylglycerol cysteine.

The protein belongs to the FlgH family. As to quaternary structure, the basal body constitutes a major portion of the flagellar organelle and consists of four rings (L,P,S, and M) mounted on a central rod.

The protein resides in the cell outer membrane. The protein localises to the bacterial flagellum basal body. Functionally, assembles around the rod to form the L-ring and probably protects the motor/basal body from shearing forces during rotation. This Campylobacter jejuni subsp. jejuni serotype O:6 (strain 81116 / NCTC 11828) protein is Flagellar L-ring protein.